Consider the following 338-residue polypeptide: MSIIMTGGGTGGHLAIIKAVKEQLKGEELIYIGSTTGQDRQWFENDEDFTETYFFDTRGVVNQRGFGKLKSLWMMLQAMMKARKLLKKYDAKVVFSVGGFSSAATAFAAKSASVPLVIHEQNAALGSLNKLLRPYAAAFISSYLEESPIKAYPIKEVFFDNVRVRKNVETIIFLGGSQGAKAINKLALEIAPKLKERGIRIIHQAGEKNIDEVRKDYEDIGIEAEVFGFTTKLADYMKEADLAIARAGASTLWELSATALPTLFIPYPYAVSDHQYYNAQFLVEKDLAWIMREGEIDTQKVLALLGEDLETKSRGLMEIVEKDGSKQIADLLKNYAKS.

UDP-N-acetyl-alpha-D-glucosamine-binding positions include 10-12 (TGG), Asn122, Ser177, and Gln275.

The protein belongs to the glycosyltransferase 28 family. MurG subfamily.

It localises to the cell inner membrane. The enzyme catalyses di-trans,octa-cis-undecaprenyl diphospho-N-acetyl-alpha-D-muramoyl-L-alanyl-D-glutamyl-meso-2,6-diaminopimeloyl-D-alanyl-D-alanine + UDP-N-acetyl-alpha-D-glucosamine = di-trans,octa-cis-undecaprenyl diphospho-[N-acetyl-alpha-D-glucosaminyl-(1-&gt;4)]-N-acetyl-alpha-D-muramoyl-L-alanyl-D-glutamyl-meso-2,6-diaminopimeloyl-D-alanyl-D-alanine + UDP + H(+). The protein operates within cell wall biogenesis; peptidoglycan biosynthesis. Its function is as follows. Cell wall formation. Catalyzes the transfer of a GlcNAc subunit on undecaprenyl-pyrophosphoryl-MurNAc-pentapeptide (lipid intermediate I) to form undecaprenyl-pyrophosphoryl-MurNAc-(pentapeptide)GlcNAc (lipid intermediate II). The sequence is that of UDP-N-acetylglucosamine--N-acetylmuramyl-(pentapeptide) pyrophosphoryl-undecaprenol N-acetylglucosamine transferase from Sulfurovum sp. (strain NBC37-1).